A 530-amino-acid polypeptide reads, in one-letter code: DEK domain-containing chromatin-associated protein 2 (530 aa).

Composition is skewed to basic and acidic residues over residues 1-47 (MATE…AEEE) and 57-68 (AKEGELGEKDKE). The segment at 1-130 (MATETLDEKT…PSKSVSIEKG (130 aa)) is disordered. Positions 41 to 61 (IGEAEEEKKEDEEEGEAKEGE) form a coiled coil. The span at 69–82 (DDVESEEEEEEEEG) shows a compositional bias: acidic residues. 2 stretches are compositionally biased toward basic and acidic residues: residues 83-93 (SGSKKSSEKET) and 100-110 (RPTRERKKVER). A coiled-coil region spans residues 185-205 (EKEEEKQRARIKEKIDKCVKE). The disordered stretch occupies residues 246 to 430 (IIADQEKAKK…GKAKAEPTRK (185 aa)). The segment covering 253-263 (AKKRKSTPKRG) has biased composition (basic residues). The Nuclear localization signal 1 motif lies at 260 to 267 (PKRGKSGE). Residues 286–332 (SDTEEGKDEGDADSEGTNDPHEEDDAAPEEESDHEKTDTDDEKDEVE) show a composition bias toward acidic residues. Short sequence motifs (nuclear localization signal) lie at residues 343-350 (SKKTVEES) and 384-391 (AKKQKVDH). Residues 374 to 384 (KQIAKSTSSPA) are compositionally biased toward polar residues. Over residues 387–397 (QKVDHVESSKE) the composition is skewed to basic and acidic residues. In terms of domain architecture, DEK-C spans 426–481 (EPTRKEMLEVVSKILKEVDFNTATLSDILQKLSDHFGVELSHRKPEVKDVITEAIN). DNA-binding regions lie at residues 444–458 (DFNT…QKLS) and 473–477 (KDVIT). A disordered region spans residues 482 to 530 (AMTDDEEEDEEEEAEAGSDKEKEEVKGEEEEEKAEAESDKEKEKEEPKD). The span at 484–497 (TDDEEEDEEEEAEA) shows a compositional bias: acidic residues. Residues 492-527 (EEEAEAGSDKEKEEVKGEEEEEKAEAESDKEKEKEE) adopt a coiled-coil conformation. Over residues 516-530 (EAESDKEKEKEEPKD) the composition is skewed to basic and acidic residues.

Found in a mRNA splicing-dependent exon junction complex (EJC). Binds specifically histones H3 and H4.

It is found in the nucleus. Its subcellular location is the nucleolus. In terms of biological role, chromatin-associated protein which contributes to the modulation of chromatin structure (such as super-helical structure of DNA) and function. Binds to chromatin of protein-coding genes throughout the genome to regulate nucleosome occupancy and chromatin accessibility, and to modulate the expression of target genes. This chain is DEK domain-containing chromatin-associated protein 2, found in Arabidopsis thaliana (Mouse-ear cress).